The primary structure comprises 757 residues: RNA-directed RNA polymerase catalytic subunit (757 aa).

Positions 50–82 are disordered; it reads SEKGKWTTNTETGAPQLNPIDGPLPEDNEPSGY. Positions 55-64 are enriched in polar residues; it reads WTTNTETGAP. 2 short sequence motifs (nuclear localization signal) span residues 187–195 and 203–216; these read RKRRVRDNM and RTIG…NKRS. Residues 249-256 are promoter-binding site; the sequence is RGFVYFVE. Residues 286 to 483 enclose the RdRp catalytic domain; the sequence is VRKMMTNSQD…GINMSKKKSY (198 aa).

It belongs to the influenza viruses polymerase PB1 family. In terms of assembly, influenza RNA polymerase is composed of three subunits: PB1, PB2 and PA. Interacts (via N-terminus) with PA (via C-terminus). Interacts (via C-terminus) with PB2 (via N-terminus); this interaction is essential for transcription initiation. Phosphorylated by host PRKCA.

Its subcellular location is the host nucleus. It is found in the host cytoplasm. The enzyme catalyses RNA(n) + a ribonucleoside 5'-triphosphate = RNA(n+1) + diphosphate. Functionally, RNA-dependent RNA polymerase which is responsible for replication and transcription of virus RNA segments. The transcription of viral mRNAs occurs by a unique mechanism called cap-snatching. 5' methylated caps of cellular mRNAs are cleaved after 10-13 nucleotides by PA. In turn, these short capped RNAs are used as primers by PB1 for transcription of viral mRNAs. During virus replication, PB1 initiates RNA synthesis and copy vRNA into complementary RNA (cRNA) which in turn serves as a template for the production of more vRNAs. This chain is RNA-directed RNA polymerase catalytic subunit, found in Aves (whales).